The chain runs to 715 residues: Staphylocoagulase (715 aa).

The first 26 residues, 1–26 (MKKQIISLGALAVASSLFTWDNKADA), serve as a signal peptide directing secretion. A compositionally biased stretch (basic and acidic residues) spans 306–327 (KYGESETKSPVVKEENKVEDPQ). 2 disordered regions span residues 306–348 (KYGE…EETT) and 430–470 (QGTE…FNKT). Polar residues predominate over residues 431-443 (GTESTLKGIQGES). 8 consecutive repeat copies span residues 495–521 (ARPR…VSYG), 522–548 (ARPT…VSYG), 549–575 (ARPT…VSYG), 576–602 (ARPT…VSYG), 603–629 (ARPT…VSYG), 630–656 (ARPT…VSYG), 657–683 (ARPT…VSYG), and 684–710 (ARPT…ATYG). The tract at residues 495–710 (ARPRFNKPSE…THADGTATYG (216 aa)) is 8 X 27 AA tandem repeats of A-R-P-[RT]-[FQY]-[NK]-K-[PA]-S-[EK]-T-N-A-Y-N-V-T-T-[NH]-[QAG]-[DN]-G-[TQ]-[VA]-[ST]-Y-G. The interval 674–697 (THGNGQVSYGARPTYNKPSKTNAY) is disordered.

This sequence belongs to the staphylocoagulase family.

Its function is as follows. Staphylocoagulase is an extracellular protein which specifically forms a complex with human prothrombin. This complex named staphylothrombin can clot fibrinogen without any proteolytic cleavage of prothrombin. This Staphylococcus aureus protein is Staphylocoagulase.